Here is a 559-residue protein sequence, read N- to C-terminus: Glutamine--tRNA ligase (559 aa).

The 'HIGH' region signature appears at 44 to 54 (PEPNGYLHIGH). Residues 45–47 (EPN) and 51–57 (HIGHAKS) contribute to the ATP site. L-glutamine contacts are provided by Asp77 and Tyr222. ATP-binding positions include Thr241 and 272–273 (RL). The 'KMSKS' region signature appears at 279–283 (LTSKR).

The protein belongs to the class-I aminoacyl-tRNA synthetase family. In terms of assembly, monomer.

Its subcellular location is the cytoplasm. It carries out the reaction tRNA(Gln) + L-glutamine + ATP = L-glutaminyl-tRNA(Gln) + AMP + diphosphate. In Actinobacillus succinogenes (strain ATCC 55618 / DSM 22257 / CCUG 43843 / 130Z), this protein is Glutamine--tRNA ligase.